The sequence spans 127 residues: MPLFGSIFSPKKTPPRKSASLSNLHSLDRSTRELELGLDYGTPTMNLAGQSLKFENGQWVADSVISGGVDRRETQRLRKRNQQLEEENNLLRLKVDILLDMLSETTAESHLKDKELDELKITNRRRK.

The interval 1-25 (MPLFGSIFSPKKTPPRKSASLSNLH) is disordered. A phosphoserine mark is found at Ser9 and Ser20. Residues 60–112 (VADSVISGGVDRRETQRLRKRNQQLEEENNLLRLKVDILLDMLSETTAESHLK) are minimal region for the interaction with PKD2. A coiled-coil region spans residues 68 to 110 (GVDRRETQRLRKRNQQLEEENNLLRLKVDILLDMLSETTAESH). Residues 77 to 98 (LRKRNQQLEEENNLLRLKVDIL) form a leucine-zipper; mediates homodimerization region.

It belongs to the chibby family. Homodimer. Homodimerization is essential for nuclear localization and interaction with KPNA4 but is dispensable for interaction with CTNNB1. Interacts with polycystin-2/PKD2 and GM130. Interacts with the C-terminal region of CTNNB1. Interacts (C-terminus) with TCIM (C-terminus), TCIM competes with CTNNB1 for the interaction with CBY1. Interacts with FAM92A; this interaction facilitates targeting of FAM92A to cilium basal body. Interacts with CIBAR2. Interacts with KPNA4.

The protein resides in the nucleus speckle. It is found in the cytoplasm. Its subcellular location is the cytoskeleton. The protein localises to the cilium basal body. It localises to the microtubule organizing center. The protein resides in the centrosome. It is found in the centriole. Its subcellular location is the golgi apparatus. The protein localises to the trans-Golgi network. It localises to the cell projection. The protein resides in the cilium. It is found in the flagellum. Its subcellular location is the nucleus. Its function is as follows. Inhibits the Wnt/Wingless pathway by binding to CTNNB1/beta-catenin and inhibiting beta-catenin-mediated transcriptional activation through competition with TCF/LEF transcription factors. Has also been shown to play a role in regulating the intracellular trafficking of polycystin-2/PKD2 and possibly of other intracellular proteins. Promotes adipocyte and cardiomyocyte differentiation. This Rattus norvegicus (Rat) protein is Protein chibby homolog 1 (Cby1).